Reading from the N-terminus, the 388-residue chain is MNLHEYQAKQIFAQYGLPVSEGCACQSLEEAIQAVKKLGGGQWVAKCQVHAGGRGKAGGVKLVKSEEEVRSFFEKFLGQRLVTFQTDAKGQPVNAIYMEACANVKKELYLGAVLDRSSQRIVFMVSTEGGVNIEEVAEKTPHLLHKMPIDPLVGAMPYQGRELAFKLGLQGKQIQQFAQIFCQLGKMFVEKDLSLLEINPLVILDNDQLHCLDAKIVVDGNALYRQPELNAMRDPSQEDAREAAAEQWHLNYVALEGNIGCMVNGAGLAMGTMDIVKLHGGQPANFLDVGGGTTKERVAEAFKIILSDQSVKAILVNIFGGIVRCDLIAEGIVAAVNEVGVSVPVVVRLEGNNAPLGREILAQSGLNIIAATSLTDAAVQVVNAAEGK.

The 236-residue stretch at 9–244 (KQIFAQYGLP…PSQEDAREAA (236 aa)) folds into the ATP-grasp domain. Residues Lys46, 53 to 55 (GRG), Glu99, Ala102, and Glu107 each bind ATP. Asn199 and Asp213 together coordinate Mg(2+). Residues Asn264 and 321–323 (GIV) contribute to the substrate site.

This sequence belongs to the succinate/malate CoA ligase beta subunit family. As to quaternary structure, heterotetramer of two alpha and two beta subunits. Mg(2+) is required as a cofactor.

The catalysed reaction is succinate + ATP + CoA = succinyl-CoA + ADP + phosphate. The enzyme catalyses GTP + succinate + CoA = succinyl-CoA + GDP + phosphate. Its pathway is carbohydrate metabolism; tricarboxylic acid cycle; succinate from succinyl-CoA (ligase route): step 1/1. Its function is as follows. Succinyl-CoA synthetase functions in the citric acid cycle (TCA), coupling the hydrolysis of succinyl-CoA to the synthesis of either ATP or GTP and thus represents the only step of substrate-level phosphorylation in the TCA. The beta subunit provides nucleotide specificity of the enzyme and binds the substrate succinate, while the binding sites for coenzyme A and phosphate are found in the alpha subunit. In Mannheimia succiniciproducens (strain KCTC 0769BP / MBEL55E), this protein is Succinate--CoA ligase [ADP-forming] subunit beta.